The chain runs to 100 residues: NADH-quinone oxidoreductase subunit K (100 aa).

3 consecutive transmembrane segments (helical) span residues 1 to 21, 28 to 48, and 64 to 84; these read MIGL…GLAG, ILLL…GFIA, and FIIA…ILWF.

This sequence belongs to the complex I subunit 4L family. In terms of assembly, NDH-1 is composed of 14 different subunits. Subunits NuoA, H, J, K, L, M, N constitute the membrane sector of the complex.

It localises to the cell inner membrane. It catalyses the reaction a quinone + NADH + 5 H(+)(in) = a quinol + NAD(+) + 4 H(+)(out). In terms of biological role, NDH-1 shuttles electrons from NADH, via FMN and iron-sulfur (Fe-S) centers, to quinones in the respiratory chain. The immediate electron acceptor for the enzyme in this species is believed to be ubiquinone. Couples the redox reaction to proton translocation (for every two electrons transferred, four hydrogen ions are translocated across the cytoplasmic membrane), and thus conserves the redox energy in a proton gradient. The sequence is that of NADH-quinone oxidoreductase subunit K from Helicobacter acinonychis (strain Sheeba).